The following is a 350-amino-acid chain: Protein SGT1 homolog A (350 aa).

TPR repeat units follow at residues 2-35, 37-69, and 71-103; these read AKEL…DPNC, EFFA…DPSL, and KAYL…TPSE. Residues 149 to 238 enclose the CS domain; that stretch reads TAKYRHEYYQ…ADIITWASLE (90 aa). An SGS domain is found at 260–350; the sequence is AYPSSKKVKD…DGMELKKWEI (91 aa).

It belongs to the SGT1 family. In terms of assembly, interacts with RAR1. Forms a ternary complex with RAR1 and barley HSP90.

In terms of biological role, functions in R gene-mediated resistance, but participates in a lower extent than SGT1B to RPP5-mediated resistance. Not required for RPM1, RPS2, RPS4 and RPS5-mediated resistance. Probably required for SCF-mediated ubiquitination, by coupling HSP90 to SCF complex for ubiquitination of HSP90 client proteins. This chain is Protein SGT1 homolog A (SGT1A), found in Arabidopsis thaliana (Mouse-ear cress).